The primary structure comprises 421 residues: UDP-N-acetylglucosamine 1-carboxyvinyltransferase (421 aa).

Phosphoenolpyruvate is bound at residue 22-23; that stretch reads KN. Residue Arg92 coordinates UDP-N-acetyl-alpha-D-glucosamine. Cys116 functions as the Proton donor in the catalytic mechanism. Cys116 carries the 2-(S-cysteinyl)pyruvic acid O-phosphothioketal modification. Asp306 and Val328 together coordinate UDP-N-acetyl-alpha-D-glucosamine.

The protein belongs to the EPSP synthase family. MurA subfamily.

It is found in the cytoplasm. It catalyses the reaction phosphoenolpyruvate + UDP-N-acetyl-alpha-D-glucosamine = UDP-N-acetyl-3-O-(1-carboxyvinyl)-alpha-D-glucosamine + phosphate. It participates in cell wall biogenesis; peptidoglycan biosynthesis. Functionally, cell wall formation. Adds enolpyruvyl to UDP-N-acetylglucosamine. This is UDP-N-acetylglucosamine 1-carboxyvinyltransferase from Thermotoga petrophila (strain ATCC BAA-488 / DSM 13995 / JCM 10881 / RKU-1).